A 301-amino-acid polypeptide reads, in one-letter code: Averufin oxidase A (301 aa).

A signal peptide spans 1 to 23 (MPTYALLGATGATGSAILRCLLA). Residues Asn-62, Asn-86, and Asn-190 are each glycosylated (N-linked (GlcNAc...) asparagine).

It belongs to the avfA family.

Its pathway is mycotoxin biosynthesis. In terms of biological role, averufin oxidase A; part of the fragmented gene cluster that mediates the biosynthesis of dothistromin (DOTH), a polyketide toxin very similar in structure to the aflatoxin precursor, versicolorin B. The first step of the pathway is the conversion of acetate to norsolorinic acid (NOR) and requires the fatty acid synthase subunits hexA and hexB, as well as the polyketide synthase pksA. PksA combines a hexanoyl starter unit and 7 malonyl-CoA extender units to synthesize the precursor NOR. The hexanoyl starter unit is provided to the acyl-carrier protein (ACP) domain by the fungal fatty acid synthase hexA/hexB. The second step is the conversion of NOR to averantin (AVN) and requires the norsolorinic acid ketoreductase nor1, which catalyzes the dehydration of norsolorinic acid to form (1'S)-averantin. The cytochrome P450 monooxygenase avnA then catalyzes the hydroxylation of AVN to 5'hydroxyaverantin (HAVN). The next step is performed by adhA that transforms HAVN to averufin (AVF). Averufin might then be converted to hydroxyversicolorone by cypX and avfA. Hydroxyversicolorone is further converted versiconal hemiacetal acetate (VHA) by moxY. VHA is then the substrate for the versiconal hemiacetal acetate esterase est1 to yield versiconal (VAL). Versicolorin B synthase vbsA then converts VAL to versicolorin B (VERB) by closing the bisfuran ring. Then, the activity of the versicolorin B desaturase verB leads to versicolorin A (VERA). DotB, a predicted chloroperoxidase, may perform epoxidation of the A-ring of VERA. Alternatively, a cytochrome P450, such as cypX or avnA could catalyze this step. It is also possible that another, uncharacterized, cytochrome P450 enzyme is responsible for this step. Opening of the epoxide could potentially be achieved by the epoxide hydrolase epoA. However, epoA seems not to be required for DOTH biosynthesis, but other epoxide hydrolases may have the ability to complement this hydrolysis. Alternatively, opening of the epoxide ring could be achieved non-enzymatically. The next step is the deoxygenation of ring A to yield the 5,8-dihydroxyanthraquinone which is most likely catalyzed by the NADPH dehydrogenase encoded by ver1. The last stages of DOTH biosynthesis are proposed to involve hydroxylation of the bisfuran. OrdB and norB might have oxidative roles here. An alternative possibility is that cytochrome P450 monoogenases such as avnA and cypX might perform these steps in addition to previously proposed steps. The sequence is that of Averufin oxidase A from Dothistroma septosporum (Red band needle blight fungus).